We begin with the raw amino-acid sequence, 132 residues long: Histone H2B.2 (132 aa).

Basic and acidic residues predominate over residues 1-19 (MAPKAEKKPASKAPAEKKP). Residues 1-39 (MAPKAEKKPASKAPAEKKPAAKKTSSSVDPSKKRTKARK) form a disordered region. 2 positions are modified to N6-acetyllysine; alternate: lysine 7 and lysine 8. Residues lysine 7 and lysine 8 each participate in a glycyl lysine isopeptide (Lys-Gly) (interchain with G-Cter in SUMO); alternate cross-link. The residue at position 11 (serine 11) is a Phosphoserine. Lysine 12 bears the N6-acetyllysine mark. At lysine 17 the chain carries N6-acetyllysine; alternate. A Glycyl lysine isopeptide (Lys-Gly) (interchain with G-Cter in SUMO); alternate cross-link involves residue lysine 17. A Glycyl lysine isopeptide (Lys-Gly) (interchain with G-Cter in SUMO) cross-link involves residue lysine 18. Residue lysine 125 forms a Glycyl lysine isopeptide (Lys-Gly) (interchain with G-Cter in ubiquitin) linkage.

This sequence belongs to the histone H2B family. As to quaternary structure, the nucleosome is a histone octamer containing two molecules each of H2A, H2B, H3 and H4 assembled in one H3-H4 heterotetramer and two H2A-H2B heterodimers. The octamer wraps approximately 147 bp of DNA. In terms of processing, monoubiquitinated by the UBC2-BRE1 complex to form H2BK123ub1. H2BK123ub1 gives a specific tag for epigenetic transcriptional activation and is also prerequisite for H3K4me and H3K79me formation. H2BK123ub1 also modulates the formation of double-strand breaks during meiosis and is a prerequisite for DNA-damage checkpoint activation. Post-translationally, phosphorylated by STE20 to form H2BS10ph during progression through meiotic prophase. May be correlated with chromosome condensation. Acetylated by GCN5 to form H2BK11ac and H2BK16ac. H2BK16ac can also be formed by ESA1. Acetylation of N-terminal lysines and particularly formation of H2BK11acK16ac has a positive effect on transcription. In terms of processing, sumoylation to form H2BK6su or H2BK7su, and probably also H2BK16su or H2BK17su, occurs preferentially near the telomeres and represses gene transcription.

Its subcellular location is the nucleus. The protein resides in the chromosome. Core component of nucleosome. Nucleosomes wrap and compact DNA into chromatin, limiting DNA accessibility to the cellular machineries which require DNA as a template. Histones thereby play a central role in transcription regulation, DNA repair, DNA replication and chromosomal stability. DNA accessibility is regulated via a complex set of post-translational modifications of histones, also called histone code, and nucleosome remodeling. The protein is Histone H2B.2 (HTB1) of Kluyveromyces lactis (strain ATCC 8585 / CBS 2359 / DSM 70799 / NBRC 1267 / NRRL Y-1140 / WM37) (Yeast).